A 72-amino-acid chain; its full sequence is MSKEENIEMQGVVIDTLPNTMFRVELENKHIVTAHISGKMRKNYIRILTGDKVTVELTPYDLTKGRIIFRSR.

The 72-residue stretch at 1–72 folds into the S1-like domain; that stretch reads MSKEENIEMQ…TKGRIIFRSR (72 aa).

Belongs to the IF-1 family. Component of the 30S ribosomal translation pre-initiation complex which assembles on the 30S ribosome in the order IF-2 and IF-3, IF-1 and N-formylmethionyl-tRNA(fMet); mRNA recruitment can occur at any time during PIC assembly.

It localises to the cytoplasm. One of the essential components for the initiation of protein synthesis. Stabilizes the binding of IF-2 and IF-3 on the 30S subunit to which N-formylmethionyl-tRNA(fMet) subsequently binds. Helps modulate mRNA selection, yielding the 30S pre-initiation complex (PIC). Upon addition of the 50S ribosomal subunit IF-1, IF-2 and IF-3 are released leaving the mature 70S translation initiation complex. This Buchnera aphidicola subsp. Acyrthosiphon pisum (strain APS) (Acyrthosiphon pisum symbiotic bacterium) protein is Translation initiation factor IF-1.